A 366-amino-acid polypeptide reads, in one-letter code: Histidinol-phosphate aminotransferase (366 aa).

K228 carries the post-translational modification N6-(pyridoxal phosphate)lysine.

Belongs to the class-II pyridoxal-phosphate-dependent aminotransferase family. Histidinol-phosphate aminotransferase subfamily. As to quaternary structure, homodimer. The cofactor is pyridoxal 5'-phosphate.

It catalyses the reaction L-histidinol phosphate + 2-oxoglutarate = 3-(imidazol-4-yl)-2-oxopropyl phosphate + L-glutamate. It participates in amino-acid biosynthesis; L-histidine biosynthesis; L-histidine from 5-phospho-alpha-D-ribose 1-diphosphate: step 7/9. The protein is Histidinol-phosphate aminotransferase of Stutzerimonas stutzeri (Pseudomonas stutzeri).